Here is a 203-residue protein sequence, read N- to C-terminus: Cbp/p300-interacting transactivator 1 (203 aa).

2 disordered regions span residues 1–24 and 51–86; these read MPTM…DANQ and TANG…PSFN. Over residues 61-84 the composition is skewed to low complexity; the sequence is PTSSSGSTSPIGSPTATPSSKPPS. The short motif at 168-177 is the Nuclear export signal element; the sequence is LMSLVVELGL.

Belongs to the CITED family. Homodimer. Binds to RBM14. Interacts (via N-terminus) with HSPA8; the interaction suppresses the association of CITED1 with p300/CBP and SMAD-mediated transcription transactivation. Interacts (via C-terminus) with TOX3 (via HGM box); the interaction increases estrogen-response element (ERE)-dependent transcription and protection against cell death. Interacts with ESR1; the interaction occurs in a estrogen-dependent manner. Interacts (unphosphorylated form preferentially and via C-terminus) with EP300. Interacts (via C-terminus) with CREBBP. Interacts with EGR2. In terms of processing, phosphorylated. Phosphorylation changes in a cell cycle-dependent manner and reduces its transcriptional cofactor activity. Expressed in calvarial osteoblasts. Expressed in nulliparous mammary epithelial cells; absent in pregnant mice and in lacting mammary glands. Also expressed in mammary tumors (at protein level). Expressed only in melanocytes and testis. Expressed at high levels in the strongly pigmented melanoma cells but at low levels in the weakly pigmented cells.

The protein resides in the nucleus. The protein localises to the cytoplasm. Transcriptional coactivator of the p300/CBP-mediated transcription complex. Enhances SMAD-mediated transcription by strengthening the functional link between the DNA-binding SMAD transcription factors and the p300/CBP transcription coactivator complex. Stimulates estrogen-dependent transactivation activity mediated by estrogen receptors signaling; stabilizes the interaction of estrogen receptor ESR1 and histone acetyltransferase EP300. Positively regulates TGF-beta signaling through its association with the SMAD/p300/CBP-mediated transcriptional coactivator complex. Induces transcription from estrogen-responsive promoters and protection against cell death. Potentiates EGR2-mediated transcriptional activation activity from the ERBB2 promoter. Acts as an inhibitor of osteoblastic mineralization through a cAMP-dependent parathyroid hormone receptor signaling. May play a role in pigmentation of melanocytes. Associates with chromatin to the estrogen-responsive TGF-alpha promoter region in a estrogen-dependent manner. The sequence is that of Cbp/p300-interacting transactivator 1 (Cited1) from Mus musculus (Mouse).